The following is a 143-amino-acid chain: Transcriptional regulator MraZ (143 aa).

SpoVT-AbrB domains lie at 5–47 and 76–119; these read EYKH…PMHE and ATEC…SSKR.

This sequence belongs to the MraZ family. As to quaternary structure, forms oligomers.

The protein localises to the cytoplasm. It localises to the nucleoid. In Halothermothrix orenii (strain H 168 / OCM 544 / DSM 9562), this protein is Transcriptional regulator MraZ.